The primary structure comprises 592 residues: A-type ATP synthase subunit A (592 aa).

Gly-233–Thr-240 serves as a coordination point for ATP.

Belongs to the ATPase alpha/beta chains family. In terms of assembly, has multiple subunits with at least A(3), B(3), C, D, E, F, H, I and proteolipid K(x).

The protein localises to the cell membrane. The catalysed reaction is ATP + H2O + 4 H(+)(in) = ADP + phosphate + 5 H(+)(out). In terms of biological role, component of the A-type ATP synthase that produces ATP from ADP in the presence of a proton gradient across the membrane. The A chain is the catalytic subunit. This chain is A-type ATP synthase subunit A, found in Saccharolobus islandicus (strain Y.N.15.51 / Yellowstone #2) (Sulfolobus islandicus).